The primary structure comprises 264 residues: MDTRPIGFLDSGVGGLTVVCELIRQLPHEKIVYIGDSARAPYGPRPKKQIKEYTWELVNFLLTQNVKMIVFACNTATAVAWEEVKAALDIPVLGVVLPGASAAIKSTTKGQVGVIGTPMTVASDIYRKKIQLLAPSIQVRSLACPKFVPIVESNEMCSSIAKKIVYDSLAPLVGKIDTLVLGCTHYPLLRPIIQNVMGPSVKLIDSGAECVRDISVLLNYFDINGNYHQKAVEHRFFTTANPEIFQEIASIWLKQKINVEHVTL.

Substrate-binding positions include 10–11 (DS) and 42–43 (YG). The active-site Proton donor/acceptor is Cys-73. Residue 74–75 (NT) participates in substrate binding. Cys-183 acts as the Proton donor/acceptor in catalysis. 184–185 (TH) provides a ligand contact to substrate.

Belongs to the aspartate/glutamate racemases family. As to quaternary structure, homodimer.

It catalyses the reaction L-glutamate = D-glutamate. It participates in cell wall biogenesis; peptidoglycan biosynthesis. Its function is as follows. Provides the (R)-glutamate required for cell wall biosynthesis. This Streptococcus pyogenes serotype M1 protein is Glutamate racemase.